A 347-amino-acid polypeptide reads, in one-letter code: Ribosomal RNA large subunit methyltransferase M (347 aa).

S-adenosyl-L-methionine is bound by residues serine 184, 217 to 220 (APGG), aspartate 236, aspartate 256, and aspartate 272. The active-site Proton acceptor is the lysine 301.

This sequence belongs to the class I-like SAM-binding methyltransferase superfamily. RNA methyltransferase RlmE family. RlmM subfamily. As to quaternary structure, monomer.

Its subcellular location is the cytoplasm. The catalysed reaction is cytidine(2498) in 23S rRNA + S-adenosyl-L-methionine = 2'-O-methylcytidine(2498) in 23S rRNA + S-adenosyl-L-homocysteine + H(+). Catalyzes the 2'-O-methylation at nucleotide C2498 in 23S rRNA. This is Ribosomal RNA large subunit methyltransferase M from Xanthomonas oryzae pv. oryzae (strain MAFF 311018).